A 393-amino-acid chain; its full sequence is Purine permease 14 (393 aa).

The residue at position 2 (Ala2) is an N-acetylalanine. The next 10 membrane-spanning stretches (helical) occupy residues 46-66 (WPTI…AKLL), 90-110 (TQSL…LIFI), 133-153 (LAVI…LAAM), 161-181 (GVFT…AAFI), 189-209 (WVVI…SSSF), 225-245 (WAAL…QNVF), 268-288 (VIIF…LIAG), 308-328 (VMAM…IVGL), 339-359 (VISV…FNFM), and 363-383 (FDAF…AYFF).

The protein belongs to the purine permeases (TC 2.A.7.14) family. As to expression, expressed in seedlings, leaves, embryos, ovules, seeds and the root and shoot meristems. In heart-stage embryos, detected in cells that failed to respond to cytokinins, including the prospective cotyledons.

It localises to the cell membrane. In terms of biological role, purine permease implicated in ATP-dependent cytokinin translocation that controls the spatiotemporal landscape of cytokinin signaling. Depletes ligands from the apoplast, which leads to a suppression of the cytokinin response. The polypeptide is Purine permease 14 (Arabidopsis thaliana (Mouse-ear cress)).